The sequence spans 334 residues: Nucleoid-associated protein ESA_01050 (334 aa).

It belongs to the YejK family.

It localises to the cytoplasm. The protein resides in the nucleoid. In Cronobacter sakazakii (strain ATCC BAA-894) (Enterobacter sakazakii), this protein is Nucleoid-associated protein ESA_01050.